Reading from the N-terminus, the 63-residue chain is Large ribosomal subunit protein bL28 (63 aa).

It belongs to the bacterial ribosomal protein bL28 family.

In Citrifermentans bemidjiense (strain ATCC BAA-1014 / DSM 16622 / JCM 12645 / Bem) (Geobacter bemidjiensis), this protein is Large ribosomal subunit protein bL28.